The sequence spans 328 residues: Malate dehydrogenase (328 aa).

11–17 (GAAGQIG) contacts NAD(+). R92 and R98 together coordinate substrate. NAD(+)-binding positions include N105, Q112, and 129-131 (VGN). Substrate contacts are provided by N131 and R162. The active-site Proton acceptor is the H187.

The protein belongs to the LDH/MDH superfamily. MDH type 2 family.

The catalysed reaction is (S)-malate + NAD(+) = oxaloacetate + NADH + H(+). Catalyzes the reversible oxidation of malate to oxaloacetate. This Coxiella burnetii (strain CbuK_Q154) (Coxiella burnetii (strain Q154)) protein is Malate dehydrogenase.